The sequence spans 65 residues: Large ribosomal subunit protein bL31 (65 aa).

The Zn(2+) site is built by Cys16, Cys18, Cys36, and Cys39.

The protein belongs to the bacterial ribosomal protein bL31 family. Type A subfamily. In terms of assembly, part of the 50S ribosomal subunit. It depends on Zn(2+) as a cofactor.

In terms of biological role, binds the 23S rRNA. The protein is Large ribosomal subunit protein bL31 of Alkaliphilus metalliredigens (strain QYMF).